The following is an 846-amino-acid chain: Rho GTPase-activating protein 17 (846 aa).

In terms of domain architecture, BAR spans 14–246; it reads QTVGRAEKTE…MRAHQDKWAE (233 aa). The Rho-GAP domain occupies 252-442; it reads TPLEEHLKRS…PIIQHADWFF (191 aa). A compositionally biased stretch (polar residues) spans 459–475; that stretch reads TPNSNHSSHTGNDSDSG. Positions 459 to 482 are disordered; that stretch reads TPNSNHSSHTGNDSDSGTLERKRP. Phosphoserine occurs at positions 484 and 575. Residues 519 to 807 are disordered; the sequence is IAPAFQPPLP…ASRIVTDTNS (289 aa). A compositionally biased stretch (polar residues) spans 592-619; that stretch reads RNSNQMTTVPNQAQTGGNSHQLSVSTPH. Over residues 637-650 the composition is skewed to pro residues; the sequence is APAPPKPGNLPPGH. A compositionally biased stretch (low complexity) spans 653 to 690; the sequence is GQSSPGTGTSPKPSARSPSPPQQQQQQQQQQQQQQQQQ. A phosphoserine mark is found at S698 and S700. Composition is skewed to pro residues over residues 704–717 and 726–741; these read IQAP…PPTQ and EPGP…PSTP. Phosphothreonine occurs at positions 730, 734, and 736. An SH3-binding motif is present at residues 730–743; that stretch reads TPPQTPTPPSTPPL. Phosphoserine is present on S739. Residue T740 is modified to Phosphothreonine. Residues 746 to 757 show a composition bias toward polar residues; sequence QNPSQSETTQLH. A compositionally biased stretch (pro residues) spans 772–782; sequence RPSVPPPPHPP. Residues 791-807 show a composition bias toward polar residues; the sequence is LTSSVPTASRIVTDTNS.

Component of a complex whose core is composed of ARHGAP17, AMOT, PALS1, PATJ and PARD3/PAR3. Interacts with NHERF1, FNBP1, TRIP10, CAPZA (CAPZA1, CAPZA2 or CAPZA3), CAPZB, CD2AP and SH3KBP1/CIN85.

The protein resides in the membrane. Its subcellular location is the cytoplasm. It localises to the cell junction. The protein localises to the tight junction. In terms of biological role, rho GTPase-activating protein involved in the maintenance of tight junction by regulating the activity of CDC42, thereby playing a central role in apical polarity of epithelial cells. Specifically acts as a GTPase activator for the CDC42 GTPase by converting it to an inactive GDP-bound state. The complex formed with AMOT acts by regulating the uptake of polarity proteins at tight junctions, possibly by deciding whether tight junction transmembrane proteins are recycled back to the plasma membrane or sent elsewhere. Participates in the Ca(2+)-dependent regulation of exocytosis, possibly by catalyzing GTPase activity of Rho family proteins and by inducing the reorganization of the cortical actin filaments. Acts as a GTPase activator in vitro for RAC1. The polypeptide is Rho GTPase-activating protein 17 (Arhgap17) (Mus musculus (Mouse)).